We begin with the raw amino-acid sequence, 79 residues long: Small ribosomal subunit protein bS18B (79 aa).

Over residues 1-11 (MPRPRKADRTP) the composition is skewed to basic and acidic residues. The interval 1 to 24 (MPRPRKADRTPARQRPNPLDRDGV) is disordered.

It belongs to the bacterial ribosomal protein bS18 family. As to quaternary structure, part of the 30S ribosomal subunit. Forms a tight heterodimer with protein bS6.

Functionally, binds as a heterodimer with protein bS6 to the central domain of the 16S rRNA, where it helps stabilize the platform of the 30S subunit. The chain is Small ribosomal subunit protein bS18B from Streptomyces coelicolor (strain ATCC BAA-471 / A3(2) / M145).